Here is a 680-residue protein sequence, read N- to C-terminus: Fermitin family homolog 2 (680 aa).

Positions 40–81 (HIGGVMLKLVEKLDVKKDWSDHALWWEKKRTWLLKTHWTLDK) are interaction with membranes containing phosphatidylinositol phosphate. Residues 141 to 165 (LKKPRDPTKKKKKKLDDQSEDEALE) form a disordered region. A phosphoserine mark is found at serine 159, serine 181, serine 339, and serine 351. Positions 189-661 (MTPTYDAHDG…GYIFLSTRAK (473 aa)) constitute an FERM domain. In terms of domain architecture, PH spans 380–476 (KVFKPKKLTL…WMAACRLASK (97 aa)). Lysine 383 lines the a 1,2-diacyl-sn-glycero-3-phospho-(1D-myo-inositol-3,4,5-trisphosphate) pocket. Phosphoserine is present on serine 666.

The protein belongs to the kindlin family. As to quaternary structure, interacts with ILK. Interacts with FBLIM1. Interacts with ITGB1 and ITGB3. Interacts with active, unphosphorylated CTNNB1. Identified in a complex with CTNNB1 and TCF7L2/TCF4. Interacts with ITGB1; the interaction is inhibited in presence of ITGB1BP1. As to expression, ubiquitous. Found in numerous tumor tissues.

It is found in the cytoplasm. It localises to the cell cortex. The protein localises to the cytoskeleton. Its subcellular location is the stress fiber. The protein resides in the cell junction. It is found in the focal adhesion. It localises to the membrane. The protein localises to the cell projection. Its subcellular location is the lamellipodium membrane. The protein resides in the nucleus. It is found in the myofibril. It localises to the sarcomere. The protein localises to the i band. Its subcellular location is the cell surface. Functionally, scaffolding protein that enhances integrin activation mediated by TLN1 and/or TLN2, but activates integrins only weakly by itself. Binds to membranes enriched in phosphoinositides. Enhances integrin-mediated cell adhesion onto the extracellular matrix and cell spreading; this requires both its ability to interact with integrins and with phospholipid membranes. Required for the assembly of focal adhesions. Participates in the connection between extracellular matrix adhesion sites and the actin cytoskeleton and also in the orchestration of actin assembly and cell shape modulation. Recruits FBLIM1 to focal adhesions. Plays a role in the TGFB1 and integrin signaling pathways. Stabilizes active CTNNB1 and plays a role in the regulation of transcription mediated by CTNNB1 and TCF7L2/TCF4 and in Wnt signaling. The sequence is that of Fermitin family homolog 2 (FERMT2) from Homo sapiens (Human).